The following is a 390-amino-acid chain: Chorismate synthase (390 aa).

NADP(+) is bound by residues R48 and R54. FMN-binding positions include 125–127, 238–239, G278, 293–297, and R319; these read RSS, NA, and KPTSS. Residues 360 to 390 are disordered; that stretch reads KVPGNIINPTNPVTTQPDVRRAEDPEPDENS. Residues 366-376 show a composition bias toward polar residues; that stretch reads INPTNPVTTQP.

It belongs to the chorismate synthase family. As to quaternary structure, homotetramer. FMNH2 serves as cofactor.

It carries out the reaction 5-O-(1-carboxyvinyl)-3-phosphoshikimate = chorismate + phosphate. It functions in the pathway metabolic intermediate biosynthesis; chorismate biosynthesis; chorismate from D-erythrose 4-phosphate and phosphoenolpyruvate: step 7/7. Functionally, catalyzes the anti-1,4-elimination of the C-3 phosphate and the C-6 proR hydrogen from 5-enolpyruvylshikimate-3-phosphate (EPSP) to yield chorismate, which is the branch point compound that serves as the starting substrate for the three terminal pathways of aromatic amino acid biosynthesis. This reaction introduces a second double bond into the aromatic ring system. The protein is Chorismate synthase of Nitrosomonas eutropha (strain DSM 101675 / C91 / Nm57).